Here is a 351-residue protein sequence, read N- to C-terminus: Apolipoprotein L4 (351 aa).

The N-terminal stretch at 1–21 (MEGAALLKIFVVCIWVQQNHP) is a signal peptide.

Belongs to the apolipoprotein L family. In terms of tissue distribution, widely expressed; the highest levels are in spinal cord, placenta, adrenal gland; also detected in spleen, bone marrow, uterus, trachea, mammary gland and testis; levels are low in brain, heart and pancreas.

It localises to the secreted. Its function is as follows. May play a role in lipid exchange and transport throughout the body. May participate in reverse cholesterol transport from peripheral cells to the liver. The protein is Apolipoprotein L4 (APOL4) of Homo sapiens (Human).